The primary structure comprises 298 residues: Inosose dehydratase (298 aa).

The protein belongs to the IolE/MocC family. Glutathione serves as cofactor. Requires Co(2+) as cofactor. Mn(2+) is required as a cofactor.

It catalyses the reaction scyllo-inosose = 3D-3,5/4-trihydroxycyclohexane-1,2-dione + H2O. It functions in the pathway polyol metabolism; myo-inositol degradation into acetyl-CoA; acetyl-CoA from myo-inositol: step 2/7. Its function is as follows. Catalyzes the dehydration of inosose (2-keto-myo-inositol, 2KMI or 2,4,6/3,5-pentahydroxycyclohexanone) to 3D-(3,5/4)-trihydroxycyclohexane-1,2-dione (D-2,3-diketo-4-deoxy-epi-inositol). In Clostridium botulinum (strain Eklund 17B / Type B), this protein is Inosose dehydratase.